The chain runs to 283 residues: Coiled-coil domain-containing protein 107 (283 aa).

The first 24 residues, 1–24, serve as a signal peptide directing secretion; sequence MAGAVSLLGVVGLLLVSALSGVLG. The tract at residues 30-62 is disordered; that stretch reads DLRAHPGNAAHPGSGATEPRRRPPLKDQRERTR. Basic and acidic residues predominate over residues 47–62; the sequence is EPRRRPPLKDQRERTR. The chain crosses the membrane as a helical span at residues 65–85; that stretch reads SLPLGALYTAAVAAFVLYKCL. Residues 104 to 134 adopt a coiled-coil conformation; sequence LQSEQQLAQLTQQLAQTEQHLNNLMAQLDPL. Disordered stretches follow at residues 164 to 207 and 258 to 283; these read KPDK…SRPL and AKGPSHSLGWEGGTTAEGRLKQSLFS. Residues 176-187 show a composition bias toward gly residues; it reads EGSGGESAGGGD.

Its subcellular location is the membrane. The chain is Coiled-coil domain-containing protein 107 (CCDC107) from Homo sapiens (Human).